Reading from the N-terminus, the 83-residue chain is Subtilisin-chymotrypsin inhibitor CI-1B (83 aa).

The segment at 1 to 28 (MRSMEGSVPKYPEPTEGSIGASGAKRSW) is disordered.

Belongs to the protease inhibitor I13 (potato type I serine protease inhibitor) family.

Its function is as follows. Inhibits both subtilisin and chymotrypsin. The polypeptide is Subtilisin-chymotrypsin inhibitor CI-1B (Hordeum vulgare (Barley)).